Here is a 274-residue protein sequence, read N- to C-terminus: Bis(5'-nucleosyl)-tetraphosphatase, symmetrical (274 aa).

This sequence belongs to the Ap4A hydrolase family.

The catalysed reaction is P(1),P(4)-bis(5'-adenosyl) tetraphosphate + H2O = 2 ADP + 2 H(+). Functionally, hydrolyzes diadenosine 5',5'''-P1,P4-tetraphosphate to yield ADP. The polypeptide is Bis(5'-nucleosyl)-tetraphosphatase, symmetrical (Shewanella putrefaciens (strain CN-32 / ATCC BAA-453)).